The primary structure comprises 583 residues: Aspartate--tRNA ligase (583 aa).

E169 lines the L-aspartate pocket. Positions Q193–K196 are aspartate. Residue R215 coordinates L-aspartate. ATP contacts are provided by residues R215–E217 and Q224. Residue H443 participates in L-aspartate binding. An ATP-binding site is contributed by E477. R484 serves as a coordination point for L-aspartate. Residue G529–R532 participates in ATP binding.

Belongs to the class-II aminoacyl-tRNA synthetase family. Type 1 subfamily. As to quaternary structure, homodimer.

The protein resides in the cytoplasm. It catalyses the reaction tRNA(Asp) + L-aspartate + ATP = L-aspartyl-tRNA(Asp) + AMP + diphosphate. Its function is as follows. Catalyzes the attachment of L-aspartate to tRNA(Asp) in a two-step reaction: L-aspartate is first activated by ATP to form Asp-AMP and then transferred to the acceptor end of tRNA(Asp). This chain is Aspartate--tRNA ligase, found in Stenotrophomonas maltophilia (strain K279a).